The following is a 312-amino-acid chain: uncharacterized protein (312 aa).

This is an uncharacterized protein from Saccharomyces cerevisiae (strain ATCC 204508 / S288c) (Baker's yeast).